We begin with the raw amino-acid sequence, 425 residues long: Elongation factor 1-alpha (425 aa).

In terms of domain architecture, tr-type G spans 5–221 (KPHMNLAVIG…NALSEPEKPT (217 aa)). Residues 14–21 (GHIDHGKS) form a G1 region. A GTP-binding site is contributed by 14–21 (GHIDHGKS). Position 21 (Ser21) interacts with Mg(2+). The interval 70–74 (GITID) is G2. The tract at residues 91-94 (DCPG) is G3. Residues 91-95 (DCPGH) and 146-149 (NKMD) contribute to the GTP site. Positions 146-149 (NKMD) are G4. Positions 185–187 (SAF) are G5.

This sequence belongs to the TRAFAC class translation factor GTPase superfamily. Classic translation factor GTPase family. EF-Tu/EF-1A subfamily.

It is found in the cytoplasm. It catalyses the reaction GTP + H2O = GDP + phosphate + H(+). In terms of biological role, GTP hydrolase that promotes the GTP-dependent binding of aminoacyl-tRNA to the A-site of ribosomes during protein biosynthesis. In Methanoculleus marisnigri (strain ATCC 35101 / DSM 1498 / JR1), this protein is Elongation factor 1-alpha.